Consider the following 229-residue polypeptide: uncharacterized protein (229 aa).

This is an uncharacterized protein from Mus musculus (Mouse).